We begin with the raw amino-acid sequence, 316 residues long: 4-hydroxyphenylacetate decarboxylase activating enzyme (316 aa).

In terms of domain architecture, Radical SAM core spans 20–307 (HDGPGCRTTV…QDIFLDNGIA (288 aa)). Residues C34, C38, C41, C60, C66, C69, and C105 each contribute to the [4Fe-4S] cluster site. S-adenosyl-L-methionine is bound at residue 40 to 42 (WCA). A 4Fe-4S ferredoxin-type domain is found at 84–115 (NKPVIDWNICKDCESFECVNSCYYNAFKLCAK). S-adenosyl-L-methionine is bound by residues G144, 193–195 (DIK), and H267.

It belongs to the organic radical-activating enzymes family. Monomer. It depends on [4Fe-4S] cluster as a cofactor.

The enzyme catalyses glycyl-[protein] + reduced [flavodoxin] + S-adenosyl-L-methionine = glycin-2-yl radical-[protein] + semiquinone [flavodoxin] + 5'-deoxyadenosine + L-methionine + H(+). In terms of biological role, catalyzes activation of 4-hydroxyphenylacetate decarboxylase under anaerobic conditions by generation of an organic free radical on a glycine residue, via a homolytic cleavage of S-adenosyl-L-methionine (SAM). This chain is 4-hydroxyphenylacetate decarboxylase activating enzyme, found in Clostridioides difficile (Peptoclostridium difficile).